A 554-amino-acid chain; its full sequence is ATP-dependent RNA helicase MRH4, mitochondrial (554 aa).

A mitochondrion-targeting transit peptide spans 1–54; that stretch reads MSSVGIASASLWLRGPVKSALKGRWLSCEQMRRYGTKSAPAVRKGGHSKKARQA. Positions 119-140 match the Q motif motif; that stretch reads DCGLDDKRVAAFLGQVQPTPIQ. In terms of domain architecture, Helicase ATP-binding spans 150–337; the sequence is TLMEPQLQVH…NKLFPNLQVV (188 aa). 163–170 serves as a coordination point for ATP; sequence AETGSGKT. The DEAD box motif lies at 285 to 288; sequence DEAD. The Helicase C-terminal domain maps to 368 to 554; the sequence is ALAQALYAIM…PVVKKNRPIQ (187 aa). A disordered region spans residues 439–474; it reads RIQDQVRPSELKKPQERRLPNSNIKVADSKDNGQRS. The span at 445–457 shows a compositional bias: basic and acidic residues; the sequence is RPSELKKPQERRL.

This sequence belongs to the DEAD box helicase family. MRH4 subfamily.

Its subcellular location is the mitochondrion. It carries out the reaction ATP + H2O = ADP + phosphate + H(+). Its function is as follows. ATP-binding RNA helicase involved in mitochondrial RNA metabolism. Required for maintenance of mitochondrial DNA. The sequence is that of ATP-dependent RNA helicase MRH4, mitochondrial (MRH4) from Eremothecium gossypii (strain ATCC 10895 / CBS 109.51 / FGSC 9923 / NRRL Y-1056) (Yeast).